A 166-amino-acid polypeptide reads, in one-letter code: Large ribosomal subunit protein uL11z (166 aa).

This sequence belongs to the universal ribosomal protein uL11 family.

Its function is as follows. Binds directly to 26S ribosomal RNA. The chain is Large ribosomal subunit protein uL11z (RPL12A) from Arabidopsis thaliana (Mouse-ear cress).